Reading from the N-terminus, the 442-residue chain is 3-phosphoshikimate 1-carboxyvinyltransferase (442 aa).

Residues 1 to 11 (MQVSRPLTVSA) are compositionally biased toward polar residues. The segment at 1-25 (MQVSRPLTVSASPKGLSGRTRVPGD) is disordered. 3-phosphoshikimate contacts are provided by K26, S27, and R31. K26 is a binding site for phosphoenolpyruvate. Positions 98 and 126 each coordinate phosphoenolpyruvate. 3-phosphoshikimate-binding residues include S171, Q173, D324, and K351. Position 173 (Q173) interacts with phosphoenolpyruvate. The active-site Proton acceptor is the D324. The phosphoenolpyruvate site is built by R355 and R398.

This sequence belongs to the EPSP synthase family. Monomer.

It localises to the cytoplasm. The enzyme catalyses 3-phosphoshikimate + phosphoenolpyruvate = 5-O-(1-carboxyvinyl)-3-phosphoshikimate + phosphate. Its pathway is metabolic intermediate biosynthesis; chorismate biosynthesis; chorismate from D-erythrose 4-phosphate and phosphoenolpyruvate: step 6/7. In terms of biological role, catalyzes the transfer of the enolpyruvyl moiety of phosphoenolpyruvate (PEP) to the 5-hydroxyl of shikimate-3-phosphate (S3P) to produce enolpyruvyl shikimate-3-phosphate and inorganic phosphate. This Gluconobacter oxydans (strain 621H) (Gluconobacter suboxydans) protein is 3-phosphoshikimate 1-carboxyvinyltransferase.